A 311-amino-acid chain; its full sequence is Probable manganese-dependent inorganic pyrophosphatase (311 aa).

Residues His9, Asp13, Asp15, Asp77, His99, and Asp151 each contribute to the Mn(2+) site.

This sequence belongs to the PPase class C family. Mn(2+) serves as cofactor.

It is found in the cytoplasm. It catalyses the reaction diphosphate + H2O = 2 phosphate + H(+). The protein is Probable manganese-dependent inorganic pyrophosphatase of Streptococcus equi subsp. equi (strain 4047).